A 185-amino-acid chain; its full sequence is Ribosome-recycling factor (185 aa).

This sequence belongs to the RRF family.

Its subcellular location is the cytoplasm. Functionally, responsible for the release of ribosomes from messenger RNA at the termination of protein biosynthesis. May increase the efficiency of translation by recycling ribosomes from one round of translation to another. In Francisella tularensis subsp. holarctica (strain FTNF002-00 / FTA), this protein is Ribosome-recycling factor.